The chain runs to 762 residues: Poly(A) RNA polymerase CID14 (762 aa).

Residues M1–R123 are disordered. Residues K50–K62 show a composition bias toward basic residues. Composition is skewed to basic and acidic residues over residues Q65–G75 and R99–R123. S189 is a binding site for ATP. D200 and D202 together coordinate Mg(2+). The ATP site is built by G266, K291, S309, and Y310. Residues N336 to N393 form the PAP-associated domain. The tract at residues S482–D762 is disordered. Positions V536–S549 are enriched in acidic residues. Over residues R572–R581 the composition is skewed to polar residues. Residue K610 coordinates ATP. 2 stretches are compositionally biased toward acidic residues: residues G677 to E687 and S697 to I707. Positions L753–D762 are enriched in polar residues.

It belongs to the DNA polymerase type-B-like family. Component of the TRAMP complex. It depends on Mg(2+) as a cofactor. Mn(2+) is required as a cofactor.

The protein localises to the nucleus. Its subcellular location is the nucleolus. The enzyme catalyses RNA(n) + ATP = RNA(n)-3'-adenine ribonucleotide + diphosphate. Its function is as follows. Required for 3' polyadenylation of the 5.8S and 25S rRNAs as a prelude to their degradation in the exosome. Involved in the nucleolar organization to ensure faithful chromosome segregation during mitosis. The polypeptide is Poly(A) RNA polymerase CID14 (Cryptococcus neoformans var. neoformans serotype D (strain JEC21 / ATCC MYA-565) (Filobasidiella neoformans)).